The primary structure comprises 467 residues: Probable glutamate decarboxylase gamma (467 aa).

An N6-(pyridoxal phosphate)lysine modification is found at Lys-278.

This sequence belongs to the group II decarboxylase family. Pyridoxal 5'-phosphate is required as a cofactor.

It carries out the reaction L-glutamate + H(+) = 4-aminobutanoate + CO2. The chain is Probable glutamate decarboxylase gamma from Listeria innocua serovar 6a (strain ATCC BAA-680 / CLIP 11262).